Reading from the N-terminus, the 398-residue chain is 1-deoxy-D-xylulose 5-phosphate reductoisomerase (398 aa).

8 residues coordinate NADPH: Thr10, Gly11, Ser12, Ile13, Gly36, Lys37, Asn38, and Asn124. Lys125 lines the 1-deoxy-D-xylulose 5-phosphate pocket. Glu126 provides a ligand contact to NADPH. Asp150 contributes to the Mn(2+) binding site. 1-deoxy-D-xylulose 5-phosphate is bound by residues Ser151, Glu152, Ser186, and His209. Glu152 is a Mn(2+) binding site. Residue Gly215 participates in NADPH binding. Residues Ser222, Asn227, Lys228, and Glu231 each contribute to the 1-deoxy-D-xylulose 5-phosphate site. Mn(2+) is bound at residue Glu231.

It belongs to the DXR family. As to quaternary structure, homodimer. Mg(2+) serves as cofactor. Mn(2+) is required as a cofactor. It depends on Co(2+) as a cofactor.

It catalyses the reaction 2-C-methyl-D-erythritol 4-phosphate + NADP(+) = 1-deoxy-D-xylulose 5-phosphate + NADPH + H(+). It functions in the pathway isoprenoid biosynthesis; isopentenyl diphosphate biosynthesis via DXP pathway; isopentenyl diphosphate from 1-deoxy-D-xylulose 5-phosphate: step 1/6. With respect to regulation, inhibited by fosmidomycin. Functionally, catalyzes the NADPH-dependent rearrangement and reduction of 1-deoxy-D-xylulose-5-phosphate (DXP) to 2-C-methyl-D-erythritol 4-phosphate (MEP). The sequence is that of 1-deoxy-D-xylulose 5-phosphate reductoisomerase (dxr) from Escherichia coli (strain K12).